A 361-amino-acid polypeptide reads, in one-letter code: Histidinol-phosphate aminotransferase (361 aa).

Residue lysine 220 is modified to N6-(pyridoxal phosphate)lysine.

It belongs to the class-II pyridoxal-phosphate-dependent aminotransferase family. Histidinol-phosphate aminotransferase subfamily. Homodimer. Pyridoxal 5'-phosphate serves as cofactor.

It catalyses the reaction L-histidinol phosphate + 2-oxoglutarate = 3-(imidazol-4-yl)-2-oxopropyl phosphate + L-glutamate. The protein operates within amino-acid biosynthesis; L-histidine biosynthesis; L-histidine from 5-phospho-alpha-D-ribose 1-diphosphate: step 7/9. In Syntrophus aciditrophicus (strain SB), this protein is Histidinol-phosphate aminotransferase.